The primary structure comprises 690 residues: Glycine--tRNA ligase beta subunit (690 aa).

This sequence belongs to the class-II aminoacyl-tRNA synthetase family. As to quaternary structure, tetramer of two alpha and two beta subunits.

The protein localises to the cytoplasm. It carries out the reaction tRNA(Gly) + glycine + ATP = glycyl-tRNA(Gly) + AMP + diphosphate. In Buchnera aphidicola subsp. Acyrthosiphon pisum (strain Tuc7), this protein is Glycine--tRNA ligase beta subunit.